The primary structure comprises 120 residues: Adenosylhomocysteinase (120 aa).

Asn-34 provides a ligand contact to NAD(+).

Belongs to the adenosylhomocysteinase family. It depends on NAD(+) as a cofactor.

It localises to the cytoplasm. It carries out the reaction S-adenosyl-L-homocysteine + H2O = L-homocysteine + adenosine. It functions in the pathway amino-acid biosynthesis; L-homocysteine biosynthesis; L-homocysteine from S-adenosyl-L-homocysteine: step 1/1. Functionally, may play a key role in the regulation of the intracellular concentration of adenosylhomocysteine. This is Adenosylhomocysteinase (ahcY) from Streptomyces fradiae (Streptomyces roseoflavus).